Here is a 602-residue protein sequence, read N- to C-terminus: Oligoendopeptidase F, chromosomal (602 aa).

Residue histidine 388 coordinates Zn(2+). The active site involves glutamate 389. Residues histidine 392 and histidine 395 each coordinate Zn(2+).

It belongs to the peptidase M3B family. It depends on Zn(2+) as a cofactor.

Hydrolyzes peptides containing between 7 and 17 amino acids with a rather wide specificity. The sequence is that of Oligoendopeptidase F, chromosomal (pepF2) from Lactococcus lactis subsp. cremoris (Streptococcus cremoris).